The chain runs to 399 residues: Enoyl-[acyl-carrier-protein] reductase [NADH] (399 aa).

NAD(+)-binding positions include glycine 48–tyrosine 53, phenylalanine 74–glutamate 75, aspartate 111–alanine 112, and leucine 139–alanine 140. Tyrosine 225 serves as a coordination point for substrate. Residue tyrosine 235 is the Proton donor of the active site. Residues lysine 244 and valine 273–threonine 275 contribute to the NAD(+) site.

Belongs to the TER reductase family. In terms of assembly, monomer.

The enzyme catalyses a 2,3-saturated acyl-[ACP] + NAD(+) = a (2E)-enoyl-[ACP] + NADH + H(+). The protein operates within lipid metabolism; fatty acid biosynthesis. In terms of biological role, involved in the final reduction of the elongation cycle of fatty acid synthesis (FAS II). Catalyzes the reduction of a carbon-carbon double bond in an enoyl moiety that is covalently linked to an acyl carrier protein (ACP). The protein is Enoyl-[acyl-carrier-protein] reductase [NADH] of Serratia proteamaculans (strain 568).